Reading from the N-terminus, the 314-residue chain is Epithelial-stromal interaction protein 1 (314 aa).

4 disordered regions span residues 1–72, 200–219, 225–267, and 292–314; these read MYPR…PNET, NRSACNIAPPAAQSSRWKLP, PSRA…HQEE, and SQPGGVEQSGGCWNMNSTDGWGI. A compositionally biased stretch (basic and acidic residues) spans 43-58; sequence AEPKGPKLERQGHGDQ. The stretch at 71-180 forms a coiled coil; the sequence is ETRRQKIQRI…QEDIRRATLR (110 aa). Over residues 232–267 the composition is skewed to basic and acidic residues; sequence AHKDSPQKEDNQKLQKTRDGHQKNKLLETKGQHQEE. Positions 305-314 are enriched in polar residues; that stretch reads NMNSTDGWGI.

Plays a role in M1 macrophage polarization and is required for the proper regulation of gene expression during M1 versus M2 macrophage differentiation. Might play a role in RELA/p65 and STAT1 phosphorylation and nuclear localization upon activation of macrophages. In Rattus norvegicus (Rat), this protein is Epithelial-stromal interaction protein 1 (Epsti1).